Reading from the N-terminus, the 210-residue chain is Probable HTH-type transcriptional regulator ArpR (210 aa).

In terms of domain architecture, HTH tetR-type spans 10-70; the sequence is QETRAQIIEA…ALLDSLHETH (61 aa). The H-T-H motif DNA-binding region spans 33-52; that stretch reads TLADIAELAGVTRGAIYWHF.

Probable regulatory protein for the antibiotic efflux pump arpABC operon. May function as a repressor. This chain is Probable HTH-type transcriptional regulator ArpR (arpR), found in Pseudomonas putida (Arthrobacter siderocapsulatus).